We begin with the raw amino-acid sequence, 254 residues long: Fasciclin-like arabinogalactan protein 7 (254 aa).

The N-terminal stretch at 1–22 (MAKMQLSIFIAVVALIVCSASA) is a signal peptide. An FAS1 domain is found at 44–186 (NVNLTELLSV…VAVYQVNRVL (143 aa)). 4 N-linked (GlcNAc...) asparagine glycosylation sites follow: Asn-46, Asn-78, Asn-104, and Asn-130. The disordered stretch occupies residues 203 to 233 (APAPIVSAPSDSPSVADSEGASSPKSSHKNS). Residues 206–220 (PIVSAPSDSPSVADS) show a composition bias toward low complexity. Polar residues predominate over residues 222–233 (GASSPKSSHKNS). Residue Asn-232 is the site of GPI-anchor amidated asparagine attachment. Positions 233–254 (SGQKLLLAPISMVISGLVALFL) are cleaved as a propeptide — removed in mature form.

It belongs to the fasciclin-like AGP family.

Its subcellular location is the cell membrane. Its function is as follows. May be a cell surface adhesion protein. This chain is Fasciclin-like arabinogalactan protein 7 (FLA7), found in Arabidopsis thaliana (Mouse-ear cress).